Here is a 566-residue protein sequence, read N- to C-terminus: Mannitol 2-dehydrogenase (566 aa).

106 to 117 (IVHVGVGGFHRA) is a binding site for NAD(+).

The protein belongs to the mannitol dehydrogenase family. As to quaternary structure, monomer.

The catalysed reaction is D-mannitol + NAD(+) = D-fructose + NADH + H(+). Its function is as follows. Catalyzes the NAD(H)-dependent interconversion of D-fructose and D-mannitol in the mannitol metabolic pathway. The protein is Mannitol 2-dehydrogenase of Pyrenophora tritici-repentis (strain Pt-1C-BFP) (Wheat tan spot fungus).